The primary structure comprises 229 residues: Lipoprotein-releasing system ATP-binding protein LolD 1 (229 aa).

The ABC transporter domain maps to 2-229; the sequence is LVVSELSKSY…VRRGRFGITA (228 aa). Residue 38–45 coordinates ATP; it reads GPSGSGKT.

It belongs to the ABC transporter superfamily. Lipoprotein translocase (TC 3.A.1.125) family. As to quaternary structure, the complex is composed of two ATP-binding proteins (LolD) and two transmembrane proteins (LolC and LolE).

Its subcellular location is the cell inner membrane. Functionally, part of the ABC transporter complex LolCDE involved in the translocation of mature outer membrane-directed lipoproteins, from the inner membrane to the periplasmic chaperone, LolA. Responsible for the formation of the LolA-lipoprotein complex in an ATP-dependent manner. This Rhodopirellula baltica (strain DSM 10527 / NCIMB 13988 / SH1) protein is Lipoprotein-releasing system ATP-binding protein LolD 1.